We begin with the raw amino-acid sequence, 76 residues long: Acyl carrier protein (76 aa).

Residues 1–76 enclose the Carrier domain; sequence MSVEEKVKKI…DAIDYIAGKQ (76 aa). O-(pantetheine 4'-phosphoryl)serine is present on serine 36.

The protein belongs to the acyl carrier protein (ACP) family. In terms of processing, 4'-phosphopantetheine is transferred from CoA to a specific serine of apo-ACP by AcpS. This modification is essential for activity because fatty acids are bound in thioester linkage to the sulfhydryl of the prosthetic group.

It localises to the cytoplasm. The protein operates within lipid metabolism; fatty acid biosynthesis. Functionally, carrier of the growing fatty acid chain in fatty acid biosynthesis. The sequence is that of Acyl carrier protein from Oleidesulfovibrio alaskensis (strain ATCC BAA-1058 / DSM 17464 / G20) (Desulfovibrio alaskensis).